A 461-amino-acid chain; its full sequence is Alcaligin biosynthesis enzyme (461 aa).

An FAD-binding site is contributed by 9 to 15 (VAIGIGP).

This sequence belongs to the lysine N(6)-hydroxylase/L-ornithine N(5)-oxygenase family. FAD serves as cofactor.

It functions in the pathway siderophore biosynthesis; alcaligin biosynthesis. The sequence is that of Alcaligin biosynthesis enzyme (alcA) from Bordetella bronchiseptica (strain ATCC BAA-588 / NCTC 13252 / RB50) (Alcaligenes bronchisepticus).